The sequence spans 291 residues: Beta-lactamase CTX-M-1 (291 aa).

A signal peptide spans 1–28; that stretch reads MVKKSLRQFTLMATATVTLLLGSVPLYA. Ser73 serves as the catalytic Nucleophile; acyl-ester intermediate. Positions 76, 133, 169, and 240 each coordinate a beta-lactam. Catalysis depends on Glu169, which acts as the Proton acceptor.

Belongs to the class-A beta-lactamase family. As to quaternary structure, monomer.

Its subcellular location is the secreted. The catalysed reaction is a beta-lactam + H2O = a substituted beta-amino acid. With respect to regulation, inhibited by the beta-lactamase-blocking agent clavulanic acid; in the TG1 strain. Extended-spectrum beta-lactamase (ESBL) which confers resistance to penicillins, as well as first, second and third-generation cephalosporins. Has cefotaxime-hydrolyzing activity. Inactive against the cephamycin antibiotic, cefoxitin, or against the carbapenem, imipenem. This chain is Beta-lactamase CTX-M-1, found in Escherichia coli.